Consider the following 170-residue polypeptide: uncharacterized protein (170 aa).

This is an uncharacterized protein from Myxococcus xanthus.